Reading from the N-terminus, the 616-residue chain is Dihydroxy-acid dehydratase (616 aa).

Mg(2+) is bound at residue Asp81. Cys122 is a [2Fe-2S] cluster binding site. Residues Asp123 and Lys124 each contribute to the Mg(2+) site. Residue Lys124 is modified to N6-carboxylysine. Cys195 serves as a coordination point for [2Fe-2S] cluster. Glu491 is a binding site for Mg(2+). Catalysis depends on Ser517, which acts as the Proton acceptor.

This sequence belongs to the IlvD/Edd family. Homodimer. [2Fe-2S] cluster is required as a cofactor. Requires Mg(2+) as cofactor.

It catalyses the reaction (2R)-2,3-dihydroxy-3-methylbutanoate = 3-methyl-2-oxobutanoate + H2O. It carries out the reaction (2R,3R)-2,3-dihydroxy-3-methylpentanoate = (S)-3-methyl-2-oxopentanoate + H2O. It functions in the pathway amino-acid biosynthesis; L-isoleucine biosynthesis; L-isoleucine from 2-oxobutanoate: step 3/4. The protein operates within amino-acid biosynthesis; L-valine biosynthesis; L-valine from pyruvate: step 3/4. Its function is as follows. Functions in the biosynthesis of branched-chain amino acids. Catalyzes the dehydration of (2R,3R)-2,3-dihydroxy-3-methylpentanoate (2,3-dihydroxy-3-methylvalerate) into 2-oxo-3-methylpentanoate (2-oxo-3-methylvalerate) and of (2R)-2,3-dihydroxy-3-methylbutanoate (2,3-dihydroxyisovalerate) into 2-oxo-3-methylbutanoate (2-oxoisovalerate), the penultimate precursor to L-isoleucine and L-valine, respectively. This is Dihydroxy-acid dehydratase from Erwinia tasmaniensis (strain DSM 17950 / CFBP 7177 / CIP 109463 / NCPPB 4357 / Et1/99).